The chain runs to 608 residues: Probable cytosolic Fe-S cluster assembly factor SPAC806.02c (608 aa).

An ATP-binding site is contributed by Gly-13–Ser-20. [4Fe-4S] cluster contacts are provided by Cys-201 and Cys-204. WD repeat units lie at residues Gly-288 to Val-327, Phe-331 to Thr-371, Gly-376 to Cys-415, Glu-421 to Thr-460, Gly-465 to Ala-504, Ile-529 to Trp-567, and Ala-576 to Lys-608.

The protein in the N-terminal section; belongs to the Mrp/NBP35 ATP-binding proteins family. NUBP2/CFD1 subfamily. This sequence in the C-terminal section; belongs to the WD repeat CIA1 family. As to quaternary structure, heterotetramer of 2 nbp35 and 2 SPAC806.02c chains. Requires [4Fe-4S] cluster as cofactor.

The protein resides in the cytoplasm. It is found in the nucleus. Functionally, fusion protein of two essential components of the cytosolic iron-sulfur (Fe/S) protein assembly (CIA) machinery. Required for maturation of extramitochondrial Fe-S proteins. May form a heterotetramer with nubp35, functioning as a Fe-S scaffold complex, mediating the de novo assembly of an Fe-S cluster and its transfer to target apoproteins. The polypeptide is Probable cytosolic Fe-S cluster assembly factor SPAC806.02c (Schizosaccharomyces pombe (strain 972 / ATCC 24843) (Fission yeast)).